Consider the following 401-residue polypeptide: Argininosuccinate synthase (401 aa).

ATP-binding positions include 8 to 16 and Ala35; that span reads AYSGGLDTS. L-citrulline contacts are provided by Tyr86 and Ser91. Residue Gly116 coordinates ATP. Residues Thr118, Asn122, and Asp123 each contribute to the L-aspartate site. Asn122 lines the L-citrulline pocket. Positions 126, 175, 184, 260, and 272 each coordinate L-citrulline.

Belongs to the argininosuccinate synthase family. Type 1 subfamily. Homotetramer.

Its subcellular location is the cytoplasm. The enzyme catalyses L-citrulline + L-aspartate + ATP = 2-(N(omega)-L-arginino)succinate + AMP + diphosphate + H(+). The protein operates within amino-acid biosynthesis; L-arginine biosynthesis; L-arginine from L-ornithine and carbamoyl phosphate: step 2/3. This chain is Argininosuccinate synthase, found in Carboxydothermus hydrogenoformans (strain ATCC BAA-161 / DSM 6008 / Z-2901).